The sequence spans 335 residues: Biotin synthase (335 aa).

The 230-residue stretch at 47–276 (FYGKKVKLNM…SKEIRISGGR (230 aa)) folds into the Radical SAM core domain. 3 residues coordinate [4Fe-4S] cluster: Cys65, Cys69, and Cys72. [2Fe-2S] cluster contacts are provided by Cys109, Cys141, Cys201, and Arg271.

It belongs to the radical SAM superfamily. Biotin synthase family. Homodimer. The cofactor is [4Fe-4S] cluster. Requires [2Fe-2S] cluster as cofactor.

It catalyses the reaction (4R,5S)-dethiobiotin + (sulfur carrier)-SH + 2 reduced [2Fe-2S]-[ferredoxin] + 2 S-adenosyl-L-methionine = (sulfur carrier)-H + biotin + 2 5'-deoxyadenosine + 2 L-methionine + 2 oxidized [2Fe-2S]-[ferredoxin]. The protein operates within cofactor biosynthesis; biotin biosynthesis; biotin from 7,8-diaminononanoate: step 2/2. Its function is as follows. Catalyzes the conversion of dethiobiotin (DTB) to biotin by the insertion of a sulfur atom into dethiobiotin via a radical-based mechanism. This is Biotin synthase from Bacillus subtilis (strain 168).